The primary structure comprises 439 residues: Serine/threonine-protein kinase 2 (439 aa).

The Protein kinase domain occupies Asn87–Asn439. Residues Ile93–Val101 and Lys117 each bind ATP. Asp307 (proton acceptor) is an active-site residue.

This sequence belongs to the protein kinase superfamily. Ser/Thr protein kinase family. Poxviruses subfamily. Phosphorylated in vivo. Autophosphorylated in vitro.

It localises to the host endoplasmic reticulum. The protein localises to the host endoplasmic reticulum-Golgi intermediate compartment. It catalyses the reaction L-seryl-[protein] + ATP = O-phospho-L-seryl-[protein] + ADP + H(+). It carries out the reaction L-threonyl-[protein] + ATP = O-phospho-L-threonyl-[protein] + ADP + H(+). Essential serine-protein kinase involved in the early stage of virion morphogenesis. The protein is Serine/threonine-protein kinase 2 (OPG054) of Vaccinia virus (strain Ankara) (VACV).